Reading from the N-terminus, the 299-residue chain is Acetaldehyde dehydrogenase (299 aa).

11 to 14 contacts NAD(+); sequence SGNI. Cys126 serves as the catalytic Acyl-thioester intermediate. NAD(+)-binding positions include 157–165 and Asn267; that span reads SAGPGTRAN.

The protein belongs to the acetaldehyde dehydrogenase family.

The enzyme catalyses acetaldehyde + NAD(+) + CoA = acetyl-CoA + NADH + H(+). The polypeptide is Acetaldehyde dehydrogenase (Bacillus cereus (strain ATCC 10987 / NRS 248)).